The sequence spans 156 residues: ATP synthase subunit b (156 aa).

Residues 7–29 (LIAQAISFAILIWFTTKFVWPYL) traverse the membrane as a helical segment.

Belongs to the ATPase B chain family. F-type ATPases have 2 components, F(1) - the catalytic core - and F(0) - the membrane proton channel. F(1) has five subunits: alpha(3), beta(3), gamma(1), delta(1), epsilon(1). F(0) has three main subunits: a(1), b(2) and c(10-14). The alpha and beta chains form an alternating ring which encloses part of the gamma chain. F(1) is attached to F(0) by a central stalk formed by the gamma and epsilon chains, while a peripheral stalk is formed by the delta and b chains.

Its subcellular location is the cell inner membrane. Its function is as follows. F(1)F(0) ATP synthase produces ATP from ADP in the presence of a proton or sodium gradient. F-type ATPases consist of two structural domains, F(1) containing the extramembraneous catalytic core and F(0) containing the membrane proton channel, linked together by a central stalk and a peripheral stalk. During catalysis, ATP synthesis in the catalytic domain of F(1) is coupled via a rotary mechanism of the central stalk subunits to proton translocation. In terms of biological role, component of the F(0) channel, it forms part of the peripheral stalk, linking F(1) to F(0). This is ATP synthase subunit b from Methylobacillus flagellatus (strain ATCC 51484 / DSM 6875 / VKM B-1610 / KT).